Reading from the N-terminus, the 140-residue chain is Large ribosomal subunit protein uL15 (140 aa).

A disordered region spans residues 1 to 32; it reads MDTKKFRGSRTCGGGTHKNRRGAGNRGGRGKA.

Belongs to the universal ribosomal protein uL15 family. Part of the 50S ribosomal subunit.

In terms of biological role, binds to the 23S rRNA. This is Large ribosomal subunit protein uL15 from Methanosarcina acetivorans (strain ATCC 35395 / DSM 2834 / JCM 12185 / C2A).